The chain runs to 296 residues: tRNA dimethylallyltransferase (296 aa).

Residue 2–9 (GPTASGKT) participates in ATP binding. Residue 4–9 (TASGKT) participates in substrate binding. Interaction with substrate tRNA stretches follow at residues 27–30 (DSAL), 151–155 (QRLSR), and 232–237 (RCVGYR).

Belongs to the IPP transferase family. As to quaternary structure, monomer. Mg(2+) is required as a cofactor.

The catalysed reaction is adenosine(37) in tRNA + dimethylallyl diphosphate = N(6)-dimethylallyladenosine(37) in tRNA + diphosphate. Its function is as follows. Catalyzes the transfer of a dimethylallyl group onto the adenine at position 37 in tRNAs that read codons beginning with uridine, leading to the formation of N6-(dimethylallyl)adenosine (i(6)A). This Shewanella frigidimarina (strain NCIMB 400) protein is tRNA dimethylallyltransferase.